We begin with the raw amino-acid sequence, 548 residues long: MNSIFKKIKNYTIVSGVFFLGSAFIIPNTSNLSSTLYKELIAVLGLLILLTVKSFDYKKILIPKNFYWFLFVIFIIFIQLIVGEIYFFQDFFFSISFLVILFLSFLLGFNERLNGDDLIVKKIAWIFIIVVQISFLIAINQKIEIVQNFFLFSSSYNGRSTANLGQPNQFSTLILITLFLLCYLREKNSLNNMVFNILSFCLIFANVMTQSRSAWISVILISLLYLLKFQKKIELRRVIFFNIVFWTLVYCVPLLFNLIFFQKNSYSTFDRLTMGSSRFEIWPQLLKAVFHKPFIGYGWGQTGVAQLETINKSSTKGEWFTYSHNLFLDLMLWNGFFIGLIISILILCFLIELYSSIKNKSDLFLFFCVVAFFVHCLLEYPFAYTYFLIPVGFLCGYISTQNIKNSISYFNLSKRKLTLFLGCCWLGYVAFWVEVLDISKKNEIYARQFLFSNHVKFYNIENYILDGFSKQLDFQYLDYCELKDKYQLLDFKKVAYRYPNASIVYKYYSISAEMKMDQKSANQIIRAYSVIKNQKIIKPKLKFCSIEY.

The next 12 helical transmembrane spans lie at 8-28 (IKNY…IIPN), 32-52 (LSST…LLTV), 68-88 (WFLF…IYFF), 91-111 (FFFS…GFNE), 119-139 (IVKK…LIAI), 164-184 (LGQP…LCYL), 189-209 (SLNN…NVMT), 213-233 (SAWI…QKKI), 239-259 (IFFN…FNLI), 331-351 (MLWN…CFLI), 363-383 (LFLF…YPFA), and 418-438 (TLFL…VLDI).

Belongs to the PglL O-oligosaccharyltransferase family.

Its subcellular location is the cell membrane. Functionally, specifically catalyzes the glycosylation of the pilin-like competence factor ComP. The chain is ComP-specific O-oligosaccharyltransferase from Acinetobacter baylyi (strain ATCC 33305 / BD413 / ADP1).